The primary structure comprises 411 residues: RNA binding protein fox-1 homolog 2 (411 aa).

The interval 16–175 is disordered; the sequence is TRGTKRESDQ…SETKASPKRL (160 aa). 2 stretches are compositionally biased toward polar residues: residues 58–83 and 99–119; these read PVSQAYQGFAPLNSQGNQEPTATPDT and NGLSTDYGSQHTQDYATQSTE. Residues 135-165 are compositionally biased toward low complexity; that stretch reads SAPATSTANASSTTDGSQTEGQQSQSQNNEN. Residues 173 to 249 form the RRM domain; it reads KRLHVSNIPF…RKIEVNNATA (77 aa).

In terms of assembly, interacts with papd4/gld2.

Its subcellular location is the nucleus. It localises to the cytoplasm. Functionally, RNA-binding protein that regulates alternative splicing events by binding to 5'-UGCAUGU-3' elements. Regulates alternative splicing of tissue-specific exons. This Xenopus laevis (African clawed frog) protein is RNA binding protein fox-1 homolog 2 (rbfox2).